Reading from the N-terminus, the 356-residue chain is S-adenosylmethionine:tRNA ribosyltransferase-isomerase (356 aa).

Belongs to the QueA family. As to quaternary structure, monomer.

It localises to the cytoplasm. The catalysed reaction is 7-aminomethyl-7-carbaguanosine(34) in tRNA + S-adenosyl-L-methionine = epoxyqueuosine(34) in tRNA + adenine + L-methionine + 2 H(+). The protein operates within tRNA modification; tRNA-queuosine biosynthesis. Functionally, transfers and isomerizes the ribose moiety from AdoMet to the 7-aminomethyl group of 7-deazaguanine (preQ1-tRNA) to give epoxyqueuosine (oQ-tRNA). The protein is S-adenosylmethionine:tRNA ribosyltransferase-isomerase of Shigella boydii serotype 18 (strain CDC 3083-94 / BS512).